A 264-amino-acid chain; its full sequence is Probable glycerol uptake facilitator protein (264 aa).

2 helical membrane-spanning segments follow: residues 13-33 and 51-71; these read WIGA…GAGS and TAAF…NSLF. The NPA 1 signature appears at 78–80; it reads NPA. The next 3 membrane-spanning stretches (helical) occupy residues 104–124, 162–182, and 195–215; these read IPLL…GAML, FATE…AGSF, and VPML…GTAI. The NPA 2 signature appears at 216–218; that stretch reads NPA. A helical transmembrane segment spans residues 244-264; that stretch reads IPVAAPLSASVILGVLVAVIV.

This sequence belongs to the MIP/aquaporin (TC 1.A.8) family.

Its subcellular location is the cell membrane. The enzyme catalyses glycerol(in) = glycerol(out). Functionally, mediates glycerol diffusion across the cytoplasmic membrane via a pore-type mechanism. The protein is Probable glycerol uptake facilitator protein (glpF) of Mycoplasma pneumoniae (strain ATCC 29342 / M129 / Subtype 1) (Mycoplasmoides pneumoniae).